Here is a 307-residue protein sequence, read N- to C-terminus: Elongation factor Ts (307 aa).

The involved in Mg(2+) ion dislocation from EF-Tu stretch occupies residues 80–83; that stretch reads TDFV.

The protein belongs to the EF-Ts family.

It is found in the cytoplasm. Associates with the EF-Tu.GDP complex and induces the exchange of GDP to GTP. It remains bound to the aminoacyl-tRNA.EF-Tu.GTP complex up to the GTP hydrolysis stage on the ribosome. This is Elongation factor Ts from Methylobacterium nodulans (strain LMG 21967 / CNCM I-2342 / ORS 2060).